The chain runs to 1494 residues: ABC multidrug transporter atrG (1494 aa).

Residues methionine 1–leucine 11 are compositionally biased toward polar residues. Disordered stretches follow at residues methionine 1–aspartate 48 and phenylalanine 84–proline 105. N-linked (GlcNAc...) asparagine glycosylation occurs at asparagine 41. N-linked (GlcNAc...) asparagine glycosylation is found at asparagine 141 and asparagine 340. The region spanning leucine 162 to glutamate 416 is the ABC transporter 1 domain. Transmembrane regions (helical) follow at residues leucine 527–tyrosine 547 and alanine 561–leucine 581. Residue asparagine 622 is glycosylated (N-linked (GlcNAc...) asparagine). The next 3 membrane-spanning stretches (helical) occupy residues glycine 636–phenylalanine 656, alanine 669–proline 689, and glycine 778–isoleucine 798. A glycan (N-linked (GlcNAc...) asparagine) is linked at asparagine 835. Positions phenylalanine 852–alanine 1095 constitute an ABC transporter 2 domain. Position 888-895 (glycine 888–threonine 895) interacts with ATP. Helical transmembrane passes span tyrosine 1191 to phenylalanine 1211, isoleucine 1227 to threonine 1247, leucine 1276 to leucine 1296, leucine 1312 to isoleucine 1332, and leucine 1351 to phenylalanine 1371. 2 N-linked (GlcNAc...) asparagine glycosylation sites follow: asparagine 1410 and asparagine 1432. A helical transmembrane segment spans residues phenylalanine 1463 to leucine 1483.

Belongs to the ABC transporter superfamily. ABCG family. PDR (TC 3.A.1.205) subfamily.

It localises to the cell membrane. The enzyme catalyses (R)-miconazole(in) + ATP + H2O = (R)-miconazole(out) + ADP + phosphate + H(+). Functionally, pleiotropic ABC efflux transporter involved in the basal level of azole susceptibility. Confers resistance to miconazole and clotrimazole. The protein is ABC multidrug transporter atrG of Aspergillus oryzae (strain ATCC 42149 / RIB 40) (Yellow koji mold).